A 239-amino-acid chain; its full sequence is Protein LIFEGUARD 2 (239 aa).

The next 7 helical transmembrane spans lie at 41 to 61 (LLVT…SVFF), 66 to 86 (AGFA…CPLY), 96 to 116 (YLLL…TCAF), 121 to 141 (VILE…LYTF), 156 to 176 (FLFG…LFPL), 179 to 199 (ISVM…IVYD), and 213 to 233 (IWAA…LLTL).

Belongs to the BI1 family. As to expression, expressed in seedlings, roots, leaves, inflorescences and flowers.

The protein resides in the membrane. In terms of biological role, regulates the brassinosteroid (BR) signaling pathway that mediates cell elongation and organ morphogenesis. (Microbial infection) Facilitates the development of the powdery mildew fungus E.cruciferarum. Its function is as follows. (Microbial infection) May prevent cell death upon A.alternata f.sp. lycopersici (AAL) toxin treatment. The chain is Protein LIFEGUARD 2 from Arabidopsis thaliana (Mouse-ear cress).